We begin with the raw amino-acid sequence, 323 residues long: GILT-like protein C02D5.2 (323 aa).

The chain crosses the membrane as a helical span at residues 13 to 32 (LICRPILTFSSLHILTAFLI). Asn-35 carries N-linked (GlcNAc...) asparagine glycosylation. A run of 2 helical transmembrane segments spans residues 37–59 (SYIN…HRFL) and 87–104 (YIYG…YRSL). Asn-289 carries an N-linked (GlcNAc...) asparagine glycan.

Belongs to the GILT family.

Its subcellular location is the membrane. In Caenorhabditis elegans, this protein is GILT-like protein C02D5.2.